The chain runs to 354 residues: MTAPTLTDLTDRAREIFRLVVEGYIASGHPVGSKALAGHGSVNLSPASIRSVLQELQDAGLLAAPHTSAGRMPTEFGLRLFVDGIMQVAEPSAAERAQIERGLVAGGTIESALAAASTALSELSAGAAVVMVPKREPRLVQISFVPLSPLRALAVLVSEDGGIENRVIDLPEPVGPSALEQAGNYLTSRLHGRTLGEAAGVVRAEIAGGRSALDEASADLVQRGLVVWTQDATARPVMVVRGQANLLDETALQDIERVRQLLEELEGAEAIARVLDAAREAQATRIFIGSENRLFSLSGSSVIASPWRDGDGRVVGVVGVIGPTRLNYARVVPMVDFTAQTLGKFIGQDGFSRK.

This sequence belongs to the HrcA family.

In terms of biological role, negative regulator of class I heat shock genes (grpE-dnaK-dnaJ and groELS operons). Prevents heat-shock induction of these operons. The protein is Heat-inducible transcription repressor HrcA of Novosphingobium aromaticivorans (strain ATCC 700278 / DSM 12444 / CCUG 56034 / CIP 105152 / NBRC 16084 / F199).